The following is a 134-amino-acid chain: uncharacterized protein (134 aa).

3 helical membrane passes run 5-25 (FGIF…FGGF), 30-50 (LILL…ETII), and 62-82 (LVKK…DQLL).

The protein belongs to the bacteriophage holin family. Cp-1 holin subfamily.

The protein resides in the cell membrane. This is an uncharacterized protein from Bacillus subtilis (strain 168).